Consider the following 156-residue polypeptide: Ribosomal RNA large subunit methyltransferase H (156 aa).

S-adenosyl-L-methionine contacts are provided by residues leucine 73, glycine 104, and 123–128; that span reads LSPLTL.

Belongs to the RNA methyltransferase RlmH family. As to quaternary structure, homodimer.

The protein resides in the cytoplasm. It carries out the reaction pseudouridine(1915) in 23S rRNA + S-adenosyl-L-methionine = N(3)-methylpseudouridine(1915) in 23S rRNA + S-adenosyl-L-homocysteine + H(+). Functionally, specifically methylates the pseudouridine at position 1915 (m3Psi1915) in 23S rRNA. The polypeptide is Ribosomal RNA large subunit methyltransferase H (Aliivibrio fischeri (strain MJ11) (Vibrio fischeri)).